The primary structure comprises 268 residues: uncharacterized protein (268 aa).

Residues 45–64 are disordered; the sequence is SDTQGPAPGINGQGKPSPGA.

This is an uncharacterized protein from Aquifex aeolicus (strain VF5).